The primary structure comprises 246 residues: High mobility group protein 1 (246 aa).

Residues 106–179 (PKKPLTVFFA…NYQREKSKYL (74 aa)) constitute a DNA-binding region (HMG box). Residues 179 to 246 (LEAKKNGTLP…KKKDKSNSSI (68 aa)) form a disordered region. Positions 214-227 (PVEKRPHDDDGSSE) are enriched in basic and acidic residues. The segment covering 228–238 (KKKKKKKKDKK) has biased composition (basic residues).

Interacts with FPR1. Interacts with an unidentified DNA helicase. Associates with rDNA.

Its subcellular location is the nucleus. The protein resides in the nucleolus. Functionally, DNA-binding protein that is probably part of the rDNA transcription apparatus. Acts synergetically with the RPA49 subunit of RNA polymerase I during rDNA transcription. May participate in mutagenesis control. This chain is High mobility group protein 1 (HMO1), found in Saccharomyces cerevisiae (strain ATCC 204508 / S288c) (Baker's yeast).